The chain runs to 129 residues: Vacuolar transporter chaperone complex subunit 1 (129 aa).

Ser-2 is subject to N-acetylserine. Over 2–32 the chain is Cytoplasmic; the sequence is SSAPLLQRTPGKKIALPTRVEPKVFFANERT. The chain crosses the membrane as a helical span at residues 33–53; sequence FLSWLNFTVMLGGLGVGLLNF. Residues 54–59 are Vacuolar-facing; that stretch reads GDKIGR. Residues 60–80 form a helical membrane-spanning segment; sequence VSAGLFTFVAMGTMIYALVTY. The Cytoplasmic segment spans residues 81–98; the sequence is HWRAAAIRRRGSGPYDDR. The chain crosses the membrane as a helical span at residues 99-119; that stretch reads LGPTLLCFFLLVAVIINFILR. Over 120–129 the chain is Vacuolar; sequence LKYNDANTKL.

It belongs to the VTC1 family. In terms of assembly, the VTC core complex is an integral membrane heterooligomer composed of the catalytic subunit VTC4 and the accessory subunits VTC1, VTC2 and VTC3. The complex exists in 2 different sub-complexes: VTC1-VTC2-VCT4 and VCT1-VTC3-VTC4. The VCT1-VTC3-VTC4 subcomplex is mostly found on the vacuolar membrane. The VTC1-VTC2-VCT4 subcomplex is observed in the cell periphery, probably ER and nuclear envelope, but localizes to the vacuole under phosphate starvation. Each subunit contains 3 transmembrane helices. VTC1 is a small membrane protein without hydrophilic domain. VTC2, VTC3 and VTC4 are related and have 2 hydrophilic domains that face the cytosol, an N-terminal SPX domain and the central core domain. The central core in VTC4 is the catalytic domain, with the essential catalytic lysine replaced by isoleucine and leucine in VTC2 and VTC3, respectively. The core complex associates with the accessory subunit VTC5. The complex interacts with the v-SNARE NYV1 and with the V(0) subunit of V-ATPase VPH1.

The protein localises to the vacuole membrane. The protein resides in the cytoplasm. It is found in the cell cortex. It localises to the endoplasmic reticulum membrane. Its subcellular location is the cytoplasmic vesicle. The protein localises to the autophagosome membrane. In terms of biological role, accessory subunit of the vacuolar transporter chaperone (VTC) complex. The VTC complex acts as a vacuolar polyphosphate polymerase that catalyzes the synthesis of inorganic polyphosphate (polyP) via transfer of phosphate from ATP to a growing polyP chain, releasing ADP. VTC exposes its catalytic domain VTC4 to the cytosol, where the growing polyP chain winds through a tunnel-shaped pocket, integrating cytoplasmic polymer synthesis with polyP membrane translocation. The VTC complex carries 9 vacuolar transmembrane domains, which are likely to constitute the translocation channel into the organelle lumen. PolyP synthesis is tightly coupled to its transport into the vacuole lumen, in order to avoid otherwise toxic intermediates in the cytosol, and it depends on the proton gradient across the membrane, formed by V-ATPase. VTC1 contributes only 3 transmembrane domains to the complex. The VTC complex also plays a role in vacuolar membrane fusion. Required for SEC18/NSF activity in SNARE priming, membrane binding of LMA1 and V(0) trans-complex formation. The protein is Vacuolar transporter chaperone complex subunit 1 of Saccharomyces cerevisiae (strain ATCC 204508 / S288c) (Baker's yeast).